The following is a 697-amino-acid chain: UBA domain-containing protein 7 (697 aa).

A disordered region spans residues 1-94 (MDDLLDFNFY…STPKSSNYDP (94 aa)). The segment covering 13 to 32 (STPSNQNNYSNNNSRTPSYS) has biased composition (low complexity). Positions 62-77 (KKTDNKISLKELERQK) are enriched in basic and acidic residues. The span at 81–92 (PDSNSTPKSSNY) shows a compositional bias: polar residues. One can recognise a UBA domain in the interval 181 to 221 (KLSSNEMYEKLRDLGFSDDQSRLALENSGSLEDAIEYILEK). Residues 306–346 (PEILPKTPIPKRKPHKVPMNEKVSEDRITTNQSRSGNDESS) form a disordered region. Over residues 323 to 333 (PMNEKVSEDRI) the composition is skewed to basic and acidic residues. Polar residues predominate over residues 334–345 (TTNQSRSGNDES). The stretch at 412-445 (VEEQQSTGNELFRKGDFSQAIEEFTNSLSQLPAK) is one TPR repeat. The interval 547-573 (ISSHSSESHSKRTTQQPKSTPNHTNIK) is disordered. Positions 559-573 (TTQQPKSTPNHTNIK) are enriched in polar residues. One can recognise a J domain in the interval 633 to 696 (CRWQKVSLSE…AWELFKQQND (64 aa)).

This is UBA domain-containing protein 7 (ucp7) from Schizosaccharomyces pombe (strain 972 / ATCC 24843) (Fission yeast).